The chain runs to 61 residues: Metallothionein-1C (61 aa).

A beta region spans residues 1–29 (MDPNCSCSTGGSCSCAGSCTCKACRCTSC). Positions 5, 7, 13, 15, 19, 21, 24, 26, 29, 33, 34, 36, 37, 41, 44, 48, 50, 57, 59, and 60 each coordinate a divalent metal cation. An alpha region spans residues 30 to 61 (KKSCCSCCPAGCARCAQGCICKGASDKCSCCA).

The protein belongs to the metallothionein superfamily. Type 1 family. Monomer.

Functionally, metallothioneins have a high content of cysteine residues that bind various heavy metals; these proteins are transcriptionally regulated by both heavy metals and glucocorticoids. The polypeptide is Metallothionein-1C (MT1C) (Sus scrofa (Pig)).